We begin with the raw amino-acid sequence, 447 residues long: Elongation factor 1-alpha (447 aa).

A tr-type G domain is found at 5 to 230 (KFHINIVVIG…DQINDAKRPS (226 aa)). A G1 region spans residues 14–21 (GHVDSGKS). 14–21 (GHVDSGKS) provides a ligand contact to GTP. Lys-55 is subject to N6,N6-dimethyllysine. Residues 70-74 (GITID) form a G2 region. The residue at position 79 (Lys-79) is an N6,N6,N6-trimethyllysine. The G3 stretch occupies residues 91–94 (DAPG). Residues 91–95 (DAPGH) and 153–156 (NKMD) each bind GTP. A G4 region spans residues 153-156 (NKMD). Lys-187 is subject to N6,N6,N6-trimethyllysine. A G5 region spans residues 194–196 (SGF). Lys-261 bears the N6-methyllysine mark. The residue at position 289 (Glu-289) is a 5-glutamyl glycerylphosphorylethanolamine. Lys-306 is subject to N6,N6,N6-trimethyllysine. The residue at position 362 (Glu-362) is a 5-glutamyl glycerylphosphorylethanolamine. Lys-396 bears the N6,N6,N6-trimethyllysine mark.

Belongs to the TRAFAC class translation factor GTPase superfamily. Classic translation factor GTPase family. EF-Tu/EF-1A subfamily. Was detected in all tissues examined but was most abundant in roots and salt-adapted cultured cells.

Its subcellular location is the cytoplasm. This protein promotes the GTP-dependent binding of aminoacyl-tRNA to the A-site of ribosomes during protein biosynthesis. The protein is Elongation factor 1-alpha of Nicotiana tabacum (Common tobacco).